The primary structure comprises 300 residues: Phospholipase A1 (300 aa).

Cysteines 4 and 87 form a disulfide. The active-site Nucleophile is serine 137. Aspartate 165 (charge relay system) is an active-site residue. Intrachain disulfides connect cysteine 176/cysteine 181 and cysteine 219/cysteine 227. Histidine 229 acts as the Charge relay system in catalysis. Cystine bridges form between cysteine 244–cysteine 268, cysteine 245–cysteine 293, and cysteine 261–cysteine 266.

Belongs to the AB hydrolase superfamily. Lipase family. In terms of tissue distribution, expressed by the venom gland.

The protein localises to the secreted. The enzyme catalyses a 1,2-diacyl-sn-glycero-3-phosphocholine + H2O = a 2-acyl-sn-glycero-3-phosphocholine + a fatty acid + H(+). In terms of biological role, catalyzes the hydrolysis of phosphatidylcholine with phospholipase A1 activity. May act as an allergen and induce hemolytic activity. The sequence is that of Phospholipase A1 from Vespula maculifrons (Eastern yellow jacket).